A 244-amino-acid polypeptide reads, in one-letter code: Aspartate/glutamate leucyltransferase (244 aa).

This sequence belongs to the R-transferase family. Bpt subfamily.

Its subcellular location is the cytoplasm. It catalyses the reaction N-terminal L-glutamyl-[protein] + L-leucyl-tRNA(Leu) = N-terminal L-leucyl-L-glutamyl-[protein] + tRNA(Leu) + H(+). It carries out the reaction N-terminal L-aspartyl-[protein] + L-leucyl-tRNA(Leu) = N-terminal L-leucyl-L-aspartyl-[protein] + tRNA(Leu) + H(+). Functions in the N-end rule pathway of protein degradation where it conjugates Leu from its aminoacyl-tRNA to the N-termini of proteins containing an N-terminal aspartate or glutamate. This Bordetella bronchiseptica (strain ATCC BAA-588 / NCTC 13252 / RB50) (Alcaligenes bronchisepticus) protein is Aspartate/glutamate leucyltransferase.